The sequence spans 455 residues: Ribulose bisphosphate carboxylase large chain (455 aa).

Lysine 5 carries the post-translational modification N6,N6,N6-trimethyllysine. Substrate is bound by residues asparagine 114 and threonine 164. Catalysis depends on lysine 166, which acts as the Proton acceptor. Lysine 168 contacts substrate. Mg(2+) is bound by residues lysine 192, aspartate 194, and glutamate 195. Position 192 is an N6-carboxylysine (lysine 192). Histidine 285 serves as the catalytic Proton acceptor. Arginine 286, histidine 318, and serine 370 together coordinate substrate.

This sequence belongs to the RuBisCO large chain family. Type I subfamily. As to quaternary structure, heterohexadecamer of 8 large chains and 8 small chains; disulfide-linked. The disulfide link is formed within the large subunit homodimers. Requires Mg(2+) as cofactor. In terms of processing, the disulfide bond which can form in the large chain dimeric partners within the hexadecamer appears to be associated with oxidative stress and protein turnover.

It is found in the plastid. It localises to the chloroplast. It carries out the reaction 2 (2R)-3-phosphoglycerate + 2 H(+) = D-ribulose 1,5-bisphosphate + CO2 + H2O. The catalysed reaction is D-ribulose 1,5-bisphosphate + O2 = 2-phosphoglycolate + (2R)-3-phosphoglycerate + 2 H(+). Functionally, ruBisCO catalyzes two reactions: the carboxylation of D-ribulose 1,5-bisphosphate, the primary event in carbon dioxide fixation, as well as the oxidative fragmentation of the pentose substrate in the photorespiration process. Both reactions occur simultaneously and in competition at the same active site. The sequence is that of Ribulose bisphosphate carboxylase large chain from Brownea coccinea (Rose of Venezuela).